The following is an 87-amino-acid chain: Dynein light chain 1, cytoplasmic (87 aa).

Belongs to the dynein light chain family. As to quaternary structure, homodimer. Cytoplasmic dynein consists of two catalytic heavy chains (HCs) and a number of non-catalytic subunits which present intermediate chains (ICs), light intermediate chains (LICs) and light chains (LCs). Component of the nuclear pore complex (NPC). NPC constitutes the exclusive means of nucleocytoplasmic transport. NPCs allow the passive diffusion of ions and small molecules and the active, nuclear transport receptor-mediated bidirectional transport of macromolecules such as proteins, RNAs, ribonucleoparticles (RNPs), and ribosomal subunits across the nuclear envelope. Due to its 8-fold rotational symmetry, all subunits are present with 8 copies or multiples thereof.

The protein localises to the cytoplasm. It localises to the cytoskeleton. Its subcellular location is the nucleus. The protein resides in the nuclear pore complex. Its function is as follows. Acts as one of several non-catalytic accessory components of the cytoplasmic dynein complex that are thought to be involved in linking dynein to cargos and to adapter proteins that regulate dynein function. Cytoplasmic dynein 1 acts as a motor for the intracellular retrograde motility of vesicles and organelles along microtubules. May play a role in changing or maintaining the spatial distribution of cytoskeletal structures. Also a component of the nuclear pore complex. This chain is Dynein light chain 1, cytoplasmic (DYN2), found in Kluyveromyces lactis (strain ATCC 8585 / CBS 2359 / DSM 70799 / NBRC 1267 / NRRL Y-1140 / WM37) (Yeast).